The primary structure comprises 74 residues: ATP synthase subunit 9, mitochondrial (74 aa).

The next 2 helical transmembrane spans lie at 8–28 (IGAG…GNVF) and 50–70 (ILGF…AFLI).

The protein belongs to the ATPase C chain family. In terms of assembly, F-type ATPases have 2 components, CF(1) - the catalytic core - and CF(0) - the membrane proton channel. CF(1) has five subunits: alpha(3), beta(3), gamma(1), delta(1), epsilon(1). CF(0) has three main subunits: a, b and c.

It is found in the mitochondrion membrane. In terms of biological role, this protein is one of the chains of the nonenzymatic membrane component (F0) of mitochondrial ATPase. The chain is ATP synthase subunit 9, mitochondrial (ATP9) from Triticum aestivum (Wheat).